The primary structure comprises 413 residues: Protein LAZY 1 (413 aa).

A helical membrane pass occupies residues 71 to 91; it reads FTFGGSGLLTIGTLGIAAVAV. Acidic residues predominate over residues 103-124; it reads DADADSDFDDNDDTAGDDEDQV. Disordered stretches follow at residues 103 to 127 and 261 to 308; these read DADA…VDSA and EDGG…ASAT. 2 short sequence motifs (nuclear localization signal) span residues 275 to 298 and 338 to 345; these read RKAG…EKVP and KKSRKRGS.

This sequence belongs to the LAZY family. In terms of tissue distribution, expressed in the node of the stem, initiating leaf founder cells, young leaf primordia, tips of axillary meristems, spikelet pair meristems of developing tassels and ears, male flower primordia, tassels, ears, silks and seeds. Expressed in leaf sheaths, leaf pulvinus and shoot apical meristem (SAM).

It localises to the cell membrane. The protein localises to the nucleus. In terms of biological role, involved in the regulation of shoot gravitropism, and tassel and ear development through the regulation of polar auxin transport (PAT) and auxin signaling. Acts as a negative regulator of basipetal PAT, but positive regulator of lateral auxin transport. Involved in the regulation of shoot gravitropism and leaf angle through the regulation of cell development. In Zea mays (Maize), this protein is Protein LAZY 1.